The primary structure comprises 281 residues: 2-hydroxymuconate semialdehyde hydrolase (281 aa).

The disordered stretch occupies residues 30–55; sequence FPALLIHGSGPASPPGPTGAGSFRSS. Residues 31–261 form the AB hydrolase-1 domain; that stretch reads PALLIHGSGP…QCGHWTQIEH (231 aa). Catalysis depends on residues S106, D227, and H255.

The protein belongs to the DmpD/TodF/XylF esterase family.

The enzyme catalyses (2Z,4E)-2-hydroxy-6-oxohexa-2,4-dienoate + H2O = 2-oxopent-4-enoate + formate + H(+). It functions in the pathway aromatic compound metabolism; benzoate degradation via hydroxylation. Catalyzes the conversion of 2-hydroxymuconate semialdehyde to 2-hydroxypent-2,4-dienoate. This chain is 2-hydroxymuconate semialdehyde hydrolase (xylF), found in Pseudomonas putida (Arthrobacter siderocapsulatus).